Here is a 242-residue protein sequence, read N- to C-terminus: Type III pantothenate kinase (242 aa).

7–14 (DLGNSRFK) is an ATP binding site. Substrate is bound by residues Y91 and 98 to 101 (GVDR). The active-site Proton acceptor is D100. ATP is bound at residue T121. T171 contacts substrate.

It belongs to the type III pantothenate kinase family. In terms of assembly, homodimer. NH4(+) is required as a cofactor. Requires K(+) as cofactor.

Its subcellular location is the cytoplasm. It carries out the reaction (R)-pantothenate + ATP = (R)-4'-phosphopantothenate + ADP + H(+). It functions in the pathway cofactor biosynthesis; coenzyme A biosynthesis; CoA from (R)-pantothenate: step 1/5. Its function is as follows. Catalyzes the phosphorylation of pantothenate (Pan), the first step in CoA biosynthesis. This is Type III pantothenate kinase from Xanthomonas oryzae pv. oryzae (strain MAFF 311018).